The chain runs to 267 residues: Phosphate import ATP-binding protein PstB 2 (267 aa).

The ABC transporter domain maps to 21-262; that stretch reads LTTKDLHVYY…AKCQSTSDYV (242 aa). 53–60 is a binding site for ATP; the sequence is GPSGCGKS.

The protein belongs to the ABC transporter superfamily. Phosphate importer (TC 3.A.1.7) family. As to quaternary structure, the complex is composed of two ATP-binding proteins (PstB), two transmembrane proteins (PstC and PstA) and a solute-binding protein (PstS).

The protein resides in the cell membrane. The enzyme catalyses phosphate(out) + ATP + H2O = ADP + 2 phosphate(in) + H(+). Its function is as follows. Part of the ABC transporter complex PstSACB involved in phosphate import. Responsible for energy coupling to the transport system. This Streptococcus agalactiae serotype Ia (strain ATCC 27591 / A909 / CDC SS700) protein is Phosphate import ATP-binding protein PstB 2.